The sequence spans 623 residues: Negative regulator of PDR1-mediated fluconazole resistance JJJ1 (623 aa).

The J domain occupies 4 to 70 (CYYDLLEVRS…QERAWYDSHK (67 aa)). The C2H2-type zinc finger occupies 363–387 (YDCFICKKSFKSEKQLENHIKTKLH). Disordered stretches follow at residues 448-476 (QSSV…KLSN), 499-581 (GADN…NDAK), and 599-623 (SHIQ…KKNK). Over residues 453–466 (DSEDFTDDNNDTED) the composition is skewed to acidic residues. The segment covering 499–508 (GADNSETQNA) has biased composition (polar residues). Residues 525-538 (ELTRILRELEESKT) are compositionally biased toward basic and acidic residues. Basic residues-rich tracts occupy residues 553 to 564 (KKKTKAKKKKNK) and 612 to 623 (KVKKGKRSKKNK).

The protein localises to the nucleus. Acts as a negative regulator of fluconazole resistance, primarily through down-regulation of the ABC transporter gene CDR1 via inactivation of the PDR1 transcriptional pathway. The chain is Negative regulator of PDR1-mediated fluconazole resistance JJJ1 from Candida glabrata (strain ATCC 2001 / BCRC 20586 / JCM 3761 / NBRC 0622 / NRRL Y-65 / CBS 138) (Yeast).